Here is a 231-residue protein sequence, read N- to C-terminus: ATP phosphoribosyltransferase (231 aa).

The protein belongs to the ATP phosphoribosyltransferase family. Short subfamily. As to quaternary structure, heteromultimer composed of HisG and HisZ subunits.

The protein resides in the cytoplasm. It catalyses the reaction 1-(5-phospho-beta-D-ribosyl)-ATP + diphosphate = 5-phospho-alpha-D-ribose 1-diphosphate + ATP. It functions in the pathway amino-acid biosynthesis; L-histidine biosynthesis; L-histidine from 5-phospho-alpha-D-ribose 1-diphosphate: step 1/9. Its function is as follows. Catalyzes the condensation of ATP and 5-phosphoribose 1-diphosphate to form N'-(5'-phosphoribosyl)-ATP (PR-ATP). Has a crucial role in the pathway because the rate of histidine biosynthesis seems to be controlled primarily by regulation of HisG enzymatic activity. In Brucella suis (strain ATCC 23445 / NCTC 10510), this protein is ATP phosphoribosyltransferase.